Here is a 908-residue protein sequence, read N- to C-terminus: Protein translocase subunit SecA (908 aa).

ATP-binding positions include Gln87, 105–109, and Asp512; that span reads GEGKT. Residues 860-908 are disordered; sequence AESLVGSSDEHEAVTAQAPMIRDGEKVGRNDPCPCGSGRKYKQCHGKLS. Positions 892, 894, 903, and 904 each coordinate Zn(2+). Residues 898–908 show a composition bias toward basic residues; it reads RKYKQCHGKLS.

It belongs to the SecA family. Monomer and homodimer. Part of the essential Sec protein translocation apparatus which comprises SecA, SecYEG and auxiliary proteins SecDF-YajC and YidC. Zn(2+) serves as cofactor.

Its subcellular location is the cell inner membrane. It localises to the cytoplasm. The enzyme catalyses ATP + H2O + cellular proteinSide 1 = ADP + phosphate + cellular proteinSide 2.. Its function is as follows. Part of the Sec protein translocase complex. Interacts with the SecYEG preprotein conducting channel. Has a central role in coupling the hydrolysis of ATP to the transfer of proteins into and across the cell membrane, serving both as a receptor for the preprotein-SecB complex and as an ATP-driven molecular motor driving the stepwise translocation of polypeptide chains across the membrane. In Shewanella baltica (strain OS155 / ATCC BAA-1091), this protein is Protein translocase subunit SecA.